The following is a 155-amino-acid chain: Transcriptional repressor NrdR (155 aa).

The segment at 3–34 is a zinc-finger region; it reads CPFCGHSSTQVLDSRVSEDGDTVRRRRRCEAC. Residues 49–139 form the ATP-cone domain; that stretch reads PAIVKKNGSR…VYRSFEDVSE (91 aa).

It belongs to the NrdR family. It depends on Zn(2+) as a cofactor.

Its function is as follows. Negatively regulates transcription of bacterial ribonucleotide reductase nrd genes and operons by binding to NrdR-boxes. The sequence is that of Transcriptional repressor NrdR from Cupriavidus metallidurans (strain ATCC 43123 / DSM 2839 / NBRC 102507 / CH34) (Ralstonia metallidurans).